Consider the following 850-residue polypeptide: Coiled-coil and C2 domain-containing protein 1B (850 aa).

Positions 1-10 are enriched in basic residues; the sequence is MPGPRPRKGP. 3 disordered regions span residues 1–21, 54–73, and 114–145; these read MPGPRPRKGPKTSGQGAETAK, LTGETGSTSRKPAPKGRAPL, and GVDEETGLVDDSEETSPDLSEEKTRDNTEQPV. The span at 114–129 shows a compositional bias: acidic residues; the sequence is GVDEETGLVDDSEETS. A coiled-coil region spans residues 167–213; it reads LQALLEERIQNYREAAASAKEAGEAAKARRCERGLKTLESQLATVRK. 2 disordered regions span residues 215-277 and 436-525; these read GKIC…SDPD and FAEL…SPSV. Over residues 234–244 the composition is skewed to basic and acidic residues; the sequence is AHQERPSKDSE. The segment covering 440 to 450 has biased composition (pro residues); that stretch reads PVPPGFPPIPG. Low complexity-rich tracts occupy residues 489–502 and 511–524; these read PAQAPLAKKPAQPL and EPKASSSKESLSPS. Phosphoserine is present on serine 585. Phosphothreonine is present on threonine 588. Positions 668 to 807 constitute a C2 domain; that stretch reads DPPSHHFELK…EKECEIREIM (140 aa).

Interacts with CHMP4B. Expressed in epididymal sperm but not in testicular sperm (at protein level).

It localises to the nucleus. In terms of biological role, transcription factor that binds specifically to the DRE (dual repressor element) and represses HTR1A gene transcription in neuronal cells. This chain is Coiled-coil and C2 domain-containing protein 1B (Cc2d1b), found in Rattus norvegicus (Rat).